The chain runs to 613 residues: Zinc metalloproteinase-disintegrin-like MTP4 (613 aa).

Positions 1–20 are cleaved as a signal peptide; it reads MIEVLLVTICFTVFPYQGSS. Residues 21-191 constitute a propeptide that is removed on maturation; that stretch reads IILESGNVND…DEPIEKISQL (171 aa). Residues 205 to 401 enclose the Peptidase M12B domain; it reads KYIELYVVVD…VRPQCILNKP (197 aa). A Ca(2+)-binding site is contributed by E208. N282 carries an N-linked (GlcNAc...) asparagine glycan. A Ca(2+)-binding site is contributed by D292. 3 disulfides stabilise this stretch: C316-C396, C356-C380, and C358-C363. Residues H341, H345, and H351 each contribute to the Zn(2+) site. Ca(2+) contacts are provided by C396, N399, N414, F416, E418, E421, and D424. The 87-residue stretch at 409–495 folds into the Disintegrin domain; sequence PPVCGNYFVE…KCPTDSFQRN (87 aa). Intrachain disulfides connect C412–C441, C423–C436, C425–C431, C435–C458, C449–C455, C454–C480, C467–C487, C474–C506, C499–C511, C518–C568, C533–C575, C543–C577, C546–C556, C563–C601, and C595–C606. Residue N437 is glycosylated (N-linked (GlcNAc...) asparagine). Residues 473 to 475 carry the D/ECD-tripeptide motif; it reads DCD. Ca(2+)-binding residues include D475, L476, E478, and D490. A hypervariable region that may play important roles toward cell migration region spans residues 561 to 574; that stretch reads KMCGKLLCEKGNAT. Residue N572 is glycosylated (N-linked (GlcNAc...) asparagine).

This sequence belongs to the venom metalloproteinase (M12B) family. P-III subfamily. In terms of assembly, monomer. The cofactor is Zn(2+). In terms of tissue distribution, expressed by the venom gland.

The protein localises to the secreted. In terms of biological role, snake venom zinc metalloproteinase that may impair hemostasis in the prey. The chain is Zinc metalloproteinase-disintegrin-like MTP4 from Drysdalia coronoides (White-lipped snake).